Here is a 197-residue protein sequence, read N- to C-terminus: C-type lectin domain family 3 member A (197 aa).

Positions 1-22 (MAKNGLVICILVITLLLDQTTS) are cleaved as a signal peptide. Disulfide bonds link cysteine 68–cysteine 78, cysteine 95–cysteine 191, and cysteine 167–cysteine 183. The region spanning 74–192 (VHKKCYLASE…CRSSKRYICE (119 aa)) is the C-type lectin domain.

As to expression, restricted to cartilage and breast. Also expressed in breast cancers.

The protein localises to the secreted. Its function is as follows. Promotes cell adhesion to laminin-332 and fibronectin. The protein is C-type lectin domain family 3 member A (CLEC3A) of Homo sapiens (Human).